The sequence spans 102 residues: uncharacterized protein (102 aa).

The protein belongs to the Gram-positive plasmids replication protein type 2 family.

This is an uncharacterized protein from Staphylococcus aureus.